Here is a 221-residue protein sequence, read N- to C-terminus: MIDLRYSSGNIFSESVHEIGIIALGSFLENHGSALPIDTDAKIASYIALNVSIITGAKFLGIVLPSTEYSYVKHGIHDSIEDVINYIKYLVENGRKIGIKKFLIINCHGGNTIIEDELLKLNSKDCFITMNSVCLTHASTEEVSLGYAVGILSEDKMKDHDPKVYGEIGMVGLTEAREKNEAIDLEAKSVEENGVFLDKVNGKSLLNDLINNYVEIVKNMI.

Fe cation contacts are provided by Glu-29, His-31, Asp-40, and His-108.

The protein belongs to the creatininase superfamily. FAPy deformylase family. In terms of assembly, homodimer. It depends on Fe(2+) as a cofactor. Zn(2+) serves as cofactor.

It carries out the reaction 2-amino-5-formylamino-6-(5-phospho-D-ribosylamino)pyrimidin-4(3H)-one + H2O = 2,5-diamino-6-(1-D-ribosylamino)pyrimidin-4(3H)-one 5'-phosphate + formate + H(+). Its pathway is cofactor biosynthesis; coenzyme F420 biosynthesis. It participates in cofactor biosynthesis; riboflavin biosynthesis. In terms of biological role, catalyzes the hydrolysis of the formamide of 2-amino-5-formylamino-6-ribosylamino-4(3H)-pyrimidinone 5'-monophosphate (FAPy) to form 2,5-diamino-6-ribosylamino-4(3H)-pyrimidinone 5'-phosphate (APy). The chain is 2-amino-5-formylamino-6-ribosylaminopyrimidin-4(3H)-one 5'-monophosphate deformylase from Methanococcus maripaludis (strain DSM 14266 / JCM 13030 / NBRC 101832 / S2 / LL).